The sequence spans 37 residues: Large ribosomal subunit protein bL36c (37 aa).

The protein belongs to the bacterial ribosomal protein bL36 family.

The protein localises to the plastid. The protein resides in the chloroplast. The chain is Large ribosomal subunit protein bL36c from Nicotiana tomentosiformis (Tobacco).